A 472-amino-acid chain; its full sequence is uncharacterized protein (472 aa).

Composition is skewed to low complexity over residues 1–21 and 63–74; these read MAFS…SRPG and ASSLPAPASSSP. The segment at 1-74 is disordered; sequence MAFSSSSLRR…SLPAPASSSP (74 aa).

This is an uncharacterized protein from Equus caballus (Horse).